Here is an 84-residue protein sequence, read N- to C-terminus: Small ribosomal subunit protein eS27 (84 aa).

The segment at 38–60 (CPKCGATTTTFSHAHRQILCQKC) adopts a C4-type zinc-finger fold.

This sequence belongs to the eukaryotic ribosomal protein eS27 family. As to quaternary structure, component of the small ribosomal subunit. The cofactor is Zn(2+).

The protein localises to the cytoplasm. Its function is as follows. Component of the small ribosomal subunit. The ribosome is a large ribonucleoprotein complex responsible for the synthesis of proteins in the cell. Required for proper rRNA processing and maturation of 18S rRNAs. The chain is Small ribosomal subunit protein eS27 (RPS27) from Entamoeba histolytica (strain ATCC 30459 / HM-1:IMSS / ABRM).